A 163-amino-acid polypeptide reads, in one-letter code: Phosphopantetheine adenylyltransferase (163 aa).

Ser9 contacts substrate. ATP is bound by residues 9–10 and His17; that span reads SF. Positions 41, 75, and 89 each coordinate substrate. Residues 90-92, Glu100, and 125-131 each bind ATP; these read GIR and HLYVRSD.

Belongs to the bacterial CoaD family. As to quaternary structure, homohexamer. Requires Mg(2+) as cofactor.

The protein localises to the cytoplasm. The enzyme catalyses (R)-4'-phosphopantetheine + ATP + H(+) = 3'-dephospho-CoA + diphosphate. Its pathway is cofactor biosynthesis; coenzyme A biosynthesis; CoA from (R)-pantothenate: step 4/5. Its function is as follows. Reversibly transfers an adenylyl group from ATP to 4'-phosphopantetheine, yielding dephospho-CoA (dPCoA) and pyrophosphate. In Borreliella burgdorferi (strain ZS7) (Borrelia burgdorferi), this protein is Phosphopantetheine adenylyltransferase.